A 476-amino-acid chain; its full sequence is Cysteine--tRNA ligase (476 aa).

Cys-36 provides a ligand contact to Zn(2+). The short motif at 38-48 (PTVYDYAHIGN) is the 'HIGH' region element. Zn(2+) contacts are provided by Cys-221, His-246, and Glu-250. Residues 278 to 282 (KMSKS) carry the 'KMSKS' region motif. Position 281 (Lys-281) interacts with ATP.

This sequence belongs to the class-I aminoacyl-tRNA synthetase family. In terms of assembly, monomer. Zn(2+) serves as cofactor.

The protein resides in the cytoplasm. It catalyses the reaction tRNA(Cys) + L-cysteine + ATP = L-cysteinyl-tRNA(Cys) + AMP + diphosphate. This Chlamydia abortus (strain DSM 27085 / S26/3) (Chlamydophila abortus) protein is Cysteine--tRNA ligase.